A 312-amino-acid polypeptide reads, in one-letter code: Serine/threonine-protein phosphatase CPPED1 (312 aa).

Ser2 is subject to Phosphoserine. The catalytic stretch occupies residues 47–250 (KAWSTGNCDA…AVFSGHYHRN (204 aa)). Residues Asp90, Asn127, and His246 each coordinate a divalent metal cation. At Ser293 the chain carries Phosphoserine.

Belongs to the metallophosphoesterase superfamily. CPPED1 family. Requires a divalent metal cation as cofactor.

The protein resides in the cytoplasm. The enzyme catalyses O-phospho-L-seryl-[protein] + H2O = L-seryl-[protein] + phosphate. It carries out the reaction O-phospho-L-threonyl-[protein] + H2O = L-threonyl-[protein] + phosphate. Protein phosphatase that dephosphorylates AKT family kinase specifically at 'Ser-473', blocking cell cycle progression and promoting cell apoptosis. May play an inhibitory role in glucose uptake by adipocytes. This chain is Serine/threonine-protein phosphatase CPPED1 (Cpped1), found in Mus musculus (Mouse).